A 235-amino-acid polypeptide reads, in one-letter code: Adapter protein MecA (235 aa).

The segment covering Leu-113–Ser-135 has biased composition (basic and acidic residues). The disordered stretch occupies residues Leu-113–Gln-136.

Belongs to the MecA family. In terms of assembly, homodimer.

Enables the recognition and targeting of unfolded and aggregated proteins to the ClpC protease or to other proteins involved in proteolysis. This Leuconostoc mesenteroides subsp. mesenteroides (strain ATCC 8293 / DSM 20343 / BCRC 11652 / CCM 1803 / JCM 6124 / NCDO 523 / NBRC 100496 / NCIMB 8023 / NCTC 12954 / NRRL B-1118 / 37Y) protein is Adapter protein MecA.